A 256-amino-acid polypeptide reads, in one-letter code: Type III pantothenate kinase (256 aa).

Residue 6–13 (DVGNSNIV) participates in ATP binding. Substrate is bound by residues Tyr100 and 107 to 110 (GADR). The Proton acceptor role is filled by Asp109. Residue Asp129 participates in K(+) binding. Thr132 serves as a coordination point for ATP. A substrate-binding site is contributed by Thr184.

It belongs to the type III pantothenate kinase family. In terms of assembly, homodimer. The cofactor is NH4(+). It depends on K(+) as a cofactor.

The protein localises to the cytoplasm. It catalyses the reaction (R)-pantothenate + ATP = (R)-4'-phosphopantothenate + ADP + H(+). Its pathway is cofactor biosynthesis; coenzyme A biosynthesis; CoA from (R)-pantothenate: step 1/5. Functionally, catalyzes the phosphorylation of pantothenate (Pan), the first step in CoA biosynthesis. The chain is Type III pantothenate kinase from Geotalea uraniireducens (strain Rf4) (Geobacter uraniireducens).